Consider the following 388-residue polypeptide: UDP-4-amino-4-deoxy-L-arabinose--oxoglutarate aminotransferase (388 aa).

K183 carries the post-translational modification N6-(pyridoxal phosphate)lysine.

It belongs to the DegT/DnrJ/EryC1 family. ArnB subfamily. Homodimer. Pyridoxal 5'-phosphate is required as a cofactor.

The catalysed reaction is UDP-4-amino-4-deoxy-beta-L-arabinose + 2-oxoglutarate = UDP-beta-L-threo-pentopyranos-4-ulose + L-glutamate. It participates in nucleotide-sugar biosynthesis; UDP-4-deoxy-4-formamido-beta-L-arabinose biosynthesis; UDP-4-deoxy-4-formamido-beta-L-arabinose from UDP-alpha-D-glucuronate: step 2/3. The protein operates within bacterial outer membrane biogenesis; lipopolysaccharide biosynthesis. Catalyzes the conversion of UDP-4-keto-arabinose (UDP-Ara4O) to UDP-4-amino-4-deoxy-L-arabinose (UDP-L-Ara4N). The modified arabinose is attached to lipid A and is required for resistance to polymyxin and cationic antimicrobial peptides. This Shewanella sediminis (strain HAW-EB3) protein is UDP-4-amino-4-deoxy-L-arabinose--oxoglutarate aminotransferase.